A 787-amino-acid polypeptide reads, in one-letter code: Glutamine-dependent NAD(+) synthetase (787 aa).

A CN hydrolase domain is found at 5-275; that stretch reads VTVAVSTLNQ…VEVTLATIDL (271 aa). The Proton acceptor; for glutaminase activity role is filled by glutamate 45. The active-site For glutaminase activity is lysine 114. Cysteine 175 (nucleophile; for glutaminase activity) is an active-site residue. Residues 325–787 are ligase; it reads MHTPEEEIAL…KIKDRTGIPV (463 aa). 355-362 contributes to the ATP binding site; that stretch reads PLSGGVDS. Serine 357 is an active-site residue. Serine 703 is subject to Phosphoserine.

The protein in the C-terminal section; belongs to the NAD synthetase family.

It carries out the reaction deamido-NAD(+) + L-glutamine + ATP + H2O = L-glutamate + AMP + diphosphate + NAD(+) + H(+). It functions in the pathway cofactor biosynthesis; NAD(+) biosynthesis; NAD(+) from deamido-NAD(+) (L-Gln route): step 1/1. Catalyzes the ATP-dependent amidation of deamido-NAD to form NAD. Uses L-glutamine as a nitrogen source. Because of its role in energy metabolism, involved in the modulation of aged-related cardiac function, mobility, and lifespan. This Drosophila melanogaster (Fruit fly) protein is Glutamine-dependent NAD(+) synthetase.